A 582-amino-acid chain; its full sequence is MNLLGSISTGFPCISLHKKSLRDENPARKRLIDMDPRWNKLRASRSSDYMGCIFEVPLLGFSKVKSSSANGSMQVFCMDYPRPELENTINFLEAAKLSASFRDSIRPKKPLEVVIAGAGLAGLSTAKYLADAGHKPILLEARDVLGGKIAAWKDKDGDFYETGLHIFFGAYPNVQNLFGELGINDRLQWKEHSMIFAMPNKPGEFSRFDFPDVLPAPFNGIWAILRNNEMLTWSEKVKFAIGLLPAMVGGQSYVEAQDSLTVKEWMKRQGVPVRVNDEVFIAMSKALNFINPDELSMQCILIALNRFLQEKHGSKIAFLDGNPPERLCMPIVEHIRSLGGQVELNSRVQKIELNSDRTVKKFVLNNGSVITGDAYVFATPVDILKLLLPEEWKEISCFQRLNKLAGVPVINVHLWFDRKLKNTYDHLLFSRSPLLSVYADMSVTCKEYYDPNRSMLELVFAPADEWISRSDSDIVDATLKELAKLFPNEIAADQSKAKLLKYHVVKTPRSVYKTVPNCEPCRPLQRTPIKGFYLAGDYTKQKYLASMEGAVLSGKLCAQAIVQDYDKLVSTAVGDQSAEMFV.

The transit peptide at 1–93 directs the protein to the chloroplast and chromoplast; that stretch reads MNLLGSISTG…ELENTINFLE (93 aa). FAD contacts are provided by residues Ala121, 140-141, Lys148, 165-166, and Tyr171; these read EA and HI. Arg306 provides a ligand contact to substrate. Residue Asp537 participates in FAD binding. Ala545 serves as a coordination point for substrate. Met547 is an FAD binding site.

The protein belongs to the carotenoid/retinoid oxidoreductase family. In terms of assembly, homotetramer. FAD is required as a cofactor. In terms of tissue distribution, expressed in flower buds and lips. Lower expression in leaves and roots.

Its subcellular location is the plastid. It localises to the chloroplast. The protein resides in the chromoplast. It is found in the membrane. The enzyme catalyses 2 a plastoquinone + 15-cis-phytoene = 9,9',15-tri-cis-zeta-carotene + 2 a plastoquinol. Its pathway is carotenoid biosynthesis; lycopene biosynthesis. Its function is as follows. Converts phytoene into zeta-carotene via the intermediary of phytofluene by the symmetrical introduction of two double bonds at the C-11 and C-11' positions of phytoene with a concomitant isomerization of two neighboring double bonds at the C9 and C9' positions from trans to cis. The protein is 15-cis-phytoene desaturase, chloroplastic/chromoplastic (PDS) of Oncidium hybrid cultivar (Orchid).